The sequence spans 154 residues: Egg-lysin (154 aa).

The N-terminal stretch at 1–18 (MKLLVLCIFAMMATLAMS) is a signal peptide.

As to quaternary structure, monomer. Homodimer. Molecules associate into dimers and then rapidly dissociate again. Interacts (as a monomer) with the egg vitelline layer protein VERL (via VERL repeats); each VERL chain can bind multiple copies of lysin. Sperm (at protein level).

The protein localises to the cytoplasmic vesicle. The protein resides in the secretory vesicle. It localises to the acrosome lumen. Creates a 3 um hole in the egg vitelline layer through which the sperm passes. Does not have enzyme activity. Species-specific interaction between the sperm protein lysin and the egg protein VERL exposes a basic surface on lysin that may dissociate the egg vitelline layer via electrostatic repulsion. Plays a role in ensuring species-specific fertilization. This Haliotis rufescens (California red abalone) protein is Egg-lysin.